The chain runs to 129 residues: C-type natriuretic peptide 1 (129 aa).

The first 24 residues, 1–24, serve as a signal peptide directing secretion; it reads MSYKRGTCLGFIMLLMVSHHHTKG. Residues 25–107 constitute a propeptide that is removed on maturation; the sequence is KPLSSLQNLS…SRRYRQRNKK (83 aa). Cys113 and Cys129 are disulfide-bonded.

It belongs to the natriuretic peptide family.

The protein resides in the secreted. Functionally, hormone which plays a role in endochondral ossification through regulation of cartilaginous growth plate chondrocytes proliferation and differentiation. May also be vasoactive and natriuretic. May be important for freshwater adaptation. This chain is C-type natriuretic peptide 1, found in Aquarana catesbeiana (American bullfrog).